A 249-amino-acid chain; its full sequence is AA9 family lytic polysaccharide monooxygenase A (249 aa).

The N-terminal stretch at 1 to 19 is a signal peptide; it reads MRGPLCFTLIAIAVTSVVA. Residues His-20 and His-97 each contribute to the Cu(2+) site. A disulfide bridge links Cys-60 with Cys-183. His-163 serves as a coordination point for O2. Cu(2+) is bound at residue Tyr-180.

This sequence belongs to the polysaccharide monooxygenase AA9 family. Requires Cu(2+) as cofactor.

The protein localises to the secreted. The enzyme catalyses [(1-&gt;4)-beta-D-glucosyl]n+m + reduced acceptor + O2 = 4-dehydro-beta-D-glucosyl-[(1-&gt;4)-beta-D-glucosyl]n-1 + [(1-&gt;4)-beta-D-glucosyl]m + acceptor + H2O.. Its function is as follows. Lytic polysaccharide monooxygenase (LPMO) that depolymerizes crystalline and amorphous polysaccharides via the oxidation of scissile alpha- or beta-(1-4)-glycosidic bonds, yielding C4 oxidation products. Catalysis by LPMOs requires the reduction of the active-site copper from Cu(II) to Cu(I) by a reducing agent and H(2)O(2) or O(2) as a cosubstrate. Active on cellulose and cello-oligosaccharides, as well as plant cell wall-derived hemicellulosic polysaccharides. Also active on cello-oligosaccharides such as cellohexaose, cellopentaose or cellotetraose. The sequence is that of AA9 family lytic polysaccharide monooxygenase A from Armillaria gallica (Bulbous honey fungus).